The sequence spans 1039 residues: Beta-galactosidase (1039 aa).

Residues Asn103 and Asp201 each coordinate substrate. Residue Asp201 coordinates Na(+). 3 residues coordinate Mg(2+): Glu415, His417, and Glu460. Substrate is bound by residues Glu460 and 536–539 (EYAH). Glu460 functions as the Proton donor in the catalytic mechanism. Glu536 functions as the Nucleophile in the catalytic mechanism. A Mg(2+)-binding site is contributed by Asn596. Na(+)-binding residues include Phe600 and Asn603. Positions 603 and 1012 each coordinate substrate.

This sequence belongs to the glycosyl hydrolase 2 family. In terms of assembly, homotetramer. Requires Mg(2+) as cofactor. The cofactor is Na(+).

The catalysed reaction is Hydrolysis of terminal non-reducing beta-D-galactose residues in beta-D-galactosides.. Its activity is regulated as follows. Inhibited by zinc, copper and nickel ions. Activated by 2-mercaptoethanol and inhibited by EDTA in vitro. In Pseudoalteromonas haloplanktis (Alteromonas haloplanktis), this protein is Beta-galactosidase (lacZ).